A 296-amino-acid polypeptide reads, in one-letter code: Bifunctional protein FolD (296 aa).

Residues 169–171 (GRG), Thr-196, and Val-237 each bind NADP(+).

This sequence belongs to the tetrahydrofolate dehydrogenase/cyclohydrolase family. In terms of assembly, homodimer.

It carries out the reaction (6R)-5,10-methylene-5,6,7,8-tetrahydrofolate + NADP(+) = (6R)-5,10-methenyltetrahydrofolate + NADPH. It catalyses the reaction (6R)-5,10-methenyltetrahydrofolate + H2O = (6R)-10-formyltetrahydrofolate + H(+). It functions in the pathway one-carbon metabolism; tetrahydrofolate interconversion. Its function is as follows. Catalyzes the oxidation of 5,10-methylenetetrahydrofolate to 5,10-methenyltetrahydrofolate and then the hydrolysis of 5,10-methenyltetrahydrofolate to 10-formyltetrahydrofolate. In Kocuria rhizophila (strain ATCC 9341 / DSM 348 / NBRC 103217 / DC2201), this protein is Bifunctional protein FolD.